We begin with the raw amino-acid sequence, 569 residues long: GATOR1 complex protein NPRL3 (569 aa).

2 disordered regions span residues 27 to 60 and 416 to 477; these read PFQRSQEHPASQTSKPRSRYAASNTGDHADEQDG and PSEE…GDSP. Polar residues-rich tracts occupy residues 34-52 and 438-468; these read HPASQTSKPRSRYAASNTG and SLSTPNALSFGSPTSSDDMTLTSPSMDNSSA. Ser-476 is subject to Phosphoserine.

This sequence belongs to the NPR3 family. In terms of assembly, within the GATOR complex, component of the GATOR1 subcomplex, made of DEPDC5, NPRL2 and NPRL3. GATOR1 mediates the strong interaction of the GATOR complex with small GTPases Rag (RagA/RRAGA, RagB/RRAGB, RagC/RRAGC and/or RagD/RRAGD) heterodimers. GATOR1 interacts with GPR155/LYCHOS; interaction takes place in presence of cholesterol and prevents interaction between GATOR1 and KICSTOR. As to expression, widely expressed. Expressed in the frontal lobe cortex as well as in the temporal, parietal, and occipital lobes.

The protein resides in the lysosome membrane. Its function is as follows. As a component of the GATOR1 complex functions as an inhibitor of the amino acid-sensing branch of the mTORC1 pathway. In response to amino acid depletion, the GATOR1 complex has GTPase activating protein (GAP) activity and strongly increases GTP hydrolysis by RagA/RRAGA (or RagB/RRAGB) within heterodimeric Rag complexes, thereby turning them into their inactive GDP-bound form, releasing mTORC1 from lysosomal surface and inhibiting mTORC1 signaling. In the presence of abundant amino acids, the GATOR1 complex is negatively regulated by GATOR2, the other GATOR subcomplex, in this amino acid-sensing branch of the TORC1 pathway. The sequence is that of GATOR1 complex protein NPRL3 from Homo sapiens (Human).